Reading from the N-terminus, the 369-residue chain is Choline-phosphate cytidylyltransferase B (369 aa).

Residues 1–27 (MPVVTTDAESETGIPKSLSNEPPSETM) are disordered. I84, F85, H92, and K122 together coordinate CTP. Positions 122 and 151 each coordinate phosphocholine. Residues H168, D169, Y173, Q195, R196, T197, and I200 each coordinate CTP. The tract at residues 309–369 (RMLQALSPKQ…SMSEGDEDEK (61 aa)) is disordered. 7 positions are modified to phosphoserine: S315, S319, S322, S323, S329, S331, and S335. Residues 319 to 339 (SPVSSPTRSRSPSRSPSPTFS) show a composition bias toward low complexity. T345 bears the Phosphothreonine mark. Phosphoserine occurs at positions 346, 349, 350, 355, 360, and 362. Positions 351 to 362 (PKAASASISSMS) are enriched in low complexity.

The protein belongs to the cytidylyltransferase family. As to quaternary structure, homodimer. Post-translationally, phosphorylated. Extensively phosphorylated. Highly expressed in testis, placenta, brain, ovary, liver and fetal lung. In terms of tissue distribution, expressed in brain, liver and fetal lung.

Its subcellular location is the cytoplasm. The protein resides in the endoplasmic reticulum. It catalyses the reaction phosphocholine + CTP + H(+) = CDP-choline + diphosphate. Its pathway is phospholipid metabolism; phosphatidylcholine biosynthesis; phosphatidylcholine from phosphocholine: step 1/2. Catalyzes the key rate-limiting step in the CDP-choline pathway for phosphatidylcholine biosynthesis. This is Choline-phosphate cytidylyltransferase B (PCYT1B) from Homo sapiens (Human).